The sequence spans 98 residues: Large ribosomal subunit protein uL23 (98 aa).

Belongs to the universal ribosomal protein uL23 family. In terms of assembly, part of the 50S ribosomal subunit. Contacts protein L29, and trigger factor when it is bound to the ribosome.

One of the early assembly proteins it binds 23S rRNA. One of the proteins that surrounds the polypeptide exit tunnel on the outside of the ribosome. Forms the main docking site for trigger factor binding to the ribosome. This is Large ribosomal subunit protein uL23 from Maricaulis maris (strain MCS10) (Caulobacter maris).